Reading from the N-terminus, the 430-residue chain is tRNA(Ile)-lysidine synthase (430 aa).

21-26 provides a ligand contact to ATP; the sequence is SGGLDS.

Belongs to the tRNA(Ile)-lysidine synthase family.

It localises to the cytoplasm. It catalyses the reaction cytidine(34) in tRNA(Ile2) + L-lysine + ATP = lysidine(34) in tRNA(Ile2) + AMP + diphosphate + H(+). Ligates lysine onto the cytidine present at position 34 of the AUA codon-specific tRNA(Ile) that contains the anticodon CAU, in an ATP-dependent manner. Cytidine is converted to lysidine, thus changing the amino acid specificity of the tRNA from methionine to isoleucine. In Salmonella choleraesuis (strain SC-B67), this protein is tRNA(Ile)-lysidine synthase.